The primary structure comprises 424 residues: tRNA(Met) cytidine acetate ligase (424 aa).

Residues 7-20, Gly102, Asn174, and Arg199 contribute to the ATP site; that span reads ITEY…HLHH.

It belongs to the TmcAL family.

The protein localises to the cytoplasm. It catalyses the reaction cytidine(34) in elongator tRNA(Met) + acetate + ATP = N(4)-acetylcytidine(34) in elongator tRNA(Met) + AMP + diphosphate. In terms of biological role, catalyzes the formation of N(4)-acetylcytidine (ac(4)C) at the wobble position of elongator tRNA(Met), using acetate and ATP as substrates. First activates an acetate ion to form acetyladenylate (Ac-AMP) and then transfers the acetyl group to tRNA to form ac(4)C34. In Alkaliphilus metalliredigens (strain QYMF), this protein is tRNA(Met) cytidine acetate ligase.